The following is a 90-amino-acid chain: UPF0298 protein SSU05_1549 (90 aa).

The protein belongs to the UPF0298 family.

It localises to the cytoplasm. This is UPF0298 protein SSU05_1549 from Streptococcus suis (strain 05ZYH33).